The primary structure comprises 133 residues: Small ribosomal subunit protein eS8 (133 aa).

The tract at residues 1–31 (MGFYQGPDNRKITGGLKGKHRDKRKYEIGNP) is disordered.

The protein belongs to the eukaryotic ribosomal protein eS8 family. Part of the 30S ribosomal subunit.

The polypeptide is Small ribosomal subunit protein eS8 (Saccharolobus solfataricus (strain ATCC 35092 / DSM 1617 / JCM 11322 / P2) (Sulfolobus solfataricus)).